The following is a 654-amino-acid chain: Probable potassium transport system protein Kup (654 aa).

13 helical membrane-spanning segments follow: residues 17 to 37, 40 to 60, 71 to 91, 99 to 119, 137 to 157, 164 to 184, 202 to 222, 240 to 260, 281 to 301, 338 to 358, 369 to 389, 394 to 414, and 423 to 443; these read GILV…LYVM, IIGL…AIFW, VLIT…LYAL, WLII…IITP, INTV…QQFG, FFAP…ILQI, LLSI…CTTG, ISWI…GAYL, LVMP…AAVI, IYIP…VLHF, GLAI…FMIL, WFII…FLIA, and GYVT…WYTA.

Belongs to the HAK/KUP transporter (TC 2.A.72) family.

It is found in the cell inner membrane. The enzyme catalyses K(+)(in) + H(+)(in) = K(+)(out) + H(+)(out). Functionally, transport of potassium into the cell. Likely operates as a K(+):H(+) symporter. The protein is Probable potassium transport system protein Kup of Flavobacterium psychrophilum (strain ATCC 49511 / DSM 21280 / CIP 103535 / JIP02/86).